A 230-amino-acid chain; its full sequence is Small ribosomal subunit protein uS3 (230 aa).

In terms of domain architecture, KH type-2 spans 39-107 (IRKFLTEKLK…PAQINISEVR (69 aa)).

The protein belongs to the universal ribosomal protein uS3 family. As to quaternary structure, part of the 30S ribosomal subunit. Forms a tight complex with proteins S10 and S14.

Binds the lower part of the 30S subunit head. Binds mRNA in the 70S ribosome, positioning it for translation. The protein is Small ribosomal subunit protein uS3 of Psychromonas ingrahamii (strain DSM 17664 / CCUG 51855 / 37).